The primary structure comprises 247 residues: MSNELIYGIHAVNAVLQRDPARFVEAYVLKGRQDDRLLPVLNELMRLGVSIQEMSRKALDDKAEGANHQGLIARVKPARQLNENDLDDILAQHEQPLLLVLDGVTDPHNLGACLRNADAAGVAAVIVPKDKSAPLTATVSKVACGAAETVPLVRVTNLARTMRALQEKGVWFVGTAGEATHDIYQSKLTGSLAIVMGAEGDGMRRLTRETCDDLIKIPMAGSVSSLNVSVACGVCLFEAVRQRMANR.

S-adenosyl-L-methionine-binding residues include glycine 197, isoleucine 217, and leucine 226.

It belongs to the class IV-like SAM-binding methyltransferase superfamily. RNA methyltransferase TrmH family. RlmB subfamily.

The protein resides in the cytoplasm. It carries out the reaction guanosine(2251) in 23S rRNA + S-adenosyl-L-methionine = 2'-O-methylguanosine(2251) in 23S rRNA + S-adenosyl-L-homocysteine + H(+). Its function is as follows. Specifically methylates the ribose of guanosine 2251 in 23S rRNA. In Vibrio cholerae serotype O1 (strain ATCC 39315 / El Tor Inaba N16961), this protein is 23S rRNA (guanosine-2'-O-)-methyltransferase RlmB.